The chain runs to 720 residues: Polyribonucleotide nucleotidyltransferase (720 aa).

Residues Asp-484 and Asp-490 each contribute to the Mg(2+) site. Positions 551–610 constitute a KH domain; that stretch reads PRMYKINIDPSKIGSVIGSGGKTIRSIIEQTNTTVDIENDGTVVIGAIDEASAKKAIKII. Positions 620 to 688 constitute an S1 motif domain; the sequence is GSIYTGKVTR…NQGRVNLSHR (69 aa). The interval 697–720 is disordered; the sequence is PISRNRDSQPRRPGPFRPSDRSNS.

Belongs to the polyribonucleotide nucleotidyltransferase family. The cofactor is Mg(2+).

The protein resides in the cytoplasm. The enzyme catalyses RNA(n+1) + phosphate = RNA(n) + a ribonucleoside 5'-diphosphate. Functionally, involved in mRNA degradation. Catalyzes the phosphorolysis of single-stranded polyribonucleotides processively in the 3'- to 5'-direction. This Dehalococcoides mccartyi (strain ATCC BAA-2100 / JCM 16839 / KCTC 5957 / BAV1) protein is Polyribonucleotide nucleotidyltransferase.